The chain runs to 205 residues: Proteasome subunit beta type-3 (205 aa).

Residue Ser-31 is modified to Phosphoserine. A Glycyl lysine isopeptide (Lys-Gly) (interchain with G-Cter in ubiquitin) cross-link involves residue Lys-70.

The protein belongs to the peptidase T1B family. The 26S proteasome consists of a 20S proteasome core and two 19S regulatory subunits. The 20S proteasome core is composed of 28 subunits that are arranged in four stacked rings, resulting in a barrel-shaped structure. The two end rings are each formed by seven alpha subunits, and the two central rings are each formed by seven beta subunits. The catalytic chamber with the active sites is on the inside of the barrel.

It is found in the cytoplasm. The protein resides in the nucleus. Its function is as follows. Non-catalytic component of the proteasome which degrades poly-ubiquitinated proteins in the cytoplasm and in the nucleus. It is essential for the regulated turnover of proteins and for the removal of misfolded proteins. The proteasome is a multicatalytic proteinase complex that is characterized by its ability to cleave peptides with Arg, Phe, Tyr, Leu, and Glu adjacent to the leaving group at neutral or slightly basic pH. It has an ATP-dependent proteolytic activity. This subunit may participate in the trypsin-like activity of the enzyme complex. The sequence is that of Proteasome subunit beta type-3 (PUP3) from Saccharomyces cerevisiae (strain ATCC 204508 / S288c) (Baker's yeast).